The primary structure comprises 223 residues: Endonuclease V (223 aa).

Mg(2+)-binding residues include D45 and D113.

This sequence belongs to the endonuclease V family. Mg(2+) is required as a cofactor.

It localises to the cytoplasm. The enzyme catalyses Endonucleolytic cleavage at apurinic or apyrimidinic sites to products with a 5'-phosphate.. In terms of biological role, DNA repair enzyme involved in the repair of deaminated bases. Selectively cleaves double-stranded DNA at the second phosphodiester bond 3' to a deoxyinosine leaving behind the intact lesion on the nicked DNA. The polypeptide is Endonuclease V (Dehalococcoides mccartyi (strain CBDB1)).